The following is a 490-amino-acid chain: Chromosomal replication initiator protein DnaA (490 aa).

Positions 1–75 (MAVSSDAEQK…SELWKQEDAD (75 aa)) are domain I, interacts with DnaA modulators. The interval 75 to 145 (DLLKIEIVVR…SEFRHNVLGS (71 aa)) is domain II. Residues 146 to 368 (PLDPRYTFGS…GAFNQLLFRQ (223 aa)) form a domain III, AAA+ region region. Positions 192, 194, 195, and 196 each coordinate ATP. Positions 369 to 490 (SFEPQITIDR…LLRRLINDQA (122 aa)) are domain IV, binds dsDNA.

It belongs to the DnaA family. As to quaternary structure, oligomerizes as a right-handed, spiral filament on DNA at oriC.

It localises to the cytoplasm. Plays an essential role in the initiation and regulation of chromosomal replication. ATP-DnaA binds to the origin of replication (oriC) to initiate formation of the DNA replication initiation complex once per cell cycle. Binds the DnaA box (a 9 base pair repeat at the origin) and separates the double-stranded (ds)DNA. Forms a right-handed helical filament on oriC DNA; dsDNA binds to the exterior of the filament while single-stranded (ss)DNA is stabiized in the filament's interior. The ATP-DnaA-oriC complex binds and stabilizes one strand of the AT-rich DNA unwinding element (DUE), permitting loading of DNA polymerase. After initiation quickly degrades to an ADP-DnaA complex that is not apt for DNA replication. Binds acidic phospholipids. The sequence is that of Chromosomal replication initiator protein DnaA from Mesorhizobium japonicum (strain LMG 29417 / CECT 9101 / MAFF 303099) (Mesorhizobium loti (strain MAFF 303099)).